The following is a 165-amino-acid chain: Chorismate pyruvate-lyase (165 aa).

Residues Met-35, Arg-77, Leu-115, and Glu-156 each contribute to the substrate site.

Belongs to the UbiC family. As to quaternary structure, monomer.

It is found in the cytoplasm. It catalyses the reaction chorismate = 4-hydroxybenzoate + pyruvate. It participates in cofactor biosynthesis; ubiquinone biosynthesis. Functionally, removes the pyruvyl group from chorismate, with concomitant aromatization of the ring, to provide 4-hydroxybenzoate (4HB) for the ubiquinone pathway. In Shigella boydii serotype 18 (strain CDC 3083-94 / BS512), this protein is Chorismate pyruvate-lyase.